The sequence spans 446 residues: ATP-dependent protease ATPase subunit HslU (446 aa).

Residues isoleucine 17, 59 to 64 (GVGKTE), aspartate 255, glutamate 320, and arginine 392 each bind ATP.

The protein belongs to the ClpX chaperone family. HslU subfamily. In terms of assembly, a double ring-shaped homohexamer of HslV is capped on each side by a ring-shaped HslU homohexamer. The assembly of the HslU/HslV complex is dependent on binding of ATP.

It localises to the cytoplasm. Functionally, ATPase subunit of a proteasome-like degradation complex; this subunit has chaperone activity. The binding of ATP and its subsequent hydrolysis by HslU are essential for unfolding of protein substrates subsequently hydrolyzed by HslV. HslU recognizes the N-terminal part of its protein substrates and unfolds these before they are guided to HslV for hydrolysis. This is ATP-dependent protease ATPase subunit HslU from Pseudomonas fluorescens (strain ATCC BAA-477 / NRRL B-23932 / Pf-5).